The primary structure comprises 311 residues: Putative protease MJ0651 (311 aa).

Ser-128 serves as the catalytic Nucleophile. Lys-180 acts as the Proton donor/acceptor in catalysis.

Belongs to the peptidase S49 family.

This is Putative protease MJ0651 from Methanocaldococcus jannaschii (strain ATCC 43067 / DSM 2661 / JAL-1 / JCM 10045 / NBRC 100440) (Methanococcus jannaschii).